The following is a 249-amino-acid chain: Receptor-transporting protein 4 (249 aa).

The Cytoplasmic segment spans residues 1 to 227; that stretch reads MLFPDDFSTW…QGCREPPQRE (227 aa). The 3CxxC-type zinc-finger motif lies at 50-162; the sequence is TVLGRFQCSR…DTRNCEACSL (113 aa). Residues 173-208 form a disordered region; that stretch reads KVKPPRSPSPLPKSSSPSKSCPPPPQTRNTDFGNKT. Polar residues predominate over residues 199–208; sequence TRNTDFGNKT. Residues 228–248 traverse the membrane as a helical segment; the sequence is IEPPLFLFLSIAAFALFSLFT.

Belongs to the TMEM7 family. As to quaternary structure, interacts with TASR16. Interacts with OPRD1 and OPRM1; the interaction promotes cell surface localization of the OPDR1-OPRM1 heterodimer. Expressed at low levels in olfactory neurons. Upon viral infection, highly expressed in brain and different cells of nervous tissue.

It localises to the membrane. Its subcellular location is the cytoplasm. Functionally, chaperone protein that facilitates the trafficking and functional cell surface expression of some G-protein coupled receptors (GPCRs). Promotes functional expression of the bitter taste receptor TAS2R16. Also promotes functional expression of the opioid receptor heterodimer OPRD1-OPRM1. In addition, acts as a potent IFN-inducible suppressor of pathogens including lyssavirus rabies, influenza A or yellow fever virus. Mechanistically, associates with the viral replicase, binds viral RNA, and thereby suppresses viral genome amplification that replicates at the endoplasmic reticulum. In addition, restores antiviral signaling by interacting with and sequestering influenza virus protein NS1. The polypeptide is Receptor-transporting protein 4 (Rtp4) (Mus musculus (Mouse)).